The primary structure comprises 208 residues: Protein-L-isoaspartate O-methyltransferase (208 aa).

Ser59 is a catalytic residue.

This sequence belongs to the methyltransferase superfamily. L-isoaspartyl/D-aspartyl protein methyltransferase family.

Its subcellular location is the cytoplasm. The catalysed reaction is [protein]-L-isoaspartate + S-adenosyl-L-methionine = [protein]-L-isoaspartate alpha-methyl ester + S-adenosyl-L-homocysteine. Its function is as follows. Catalyzes the methyl esterification of L-isoaspartyl residues in peptides and proteins that result from spontaneous decomposition of normal L-aspartyl and L-asparaginyl residues. It plays a role in the repair and/or degradation of damaged proteins. The chain is Protein-L-isoaspartate O-methyltransferase from Vibrio cholerae serotype O1 (strain ATCC 39541 / Classical Ogawa 395 / O395).